A 136-amino-acid polypeptide reads, in one-letter code: MSLIKEFKAFASRGNVIDMAVGIIIGAAFGKIVSSFVADIIMPPIGIILGGVNFSDLSIVLQAAQGDAPSVVIAYGKFIQTIIDFTIIAFAIFMGVKAINRLKRKEEVAPKAPAAPTKDQELLSEIRDLLKAQQEK.

Transmembrane regions (helical) follow at residues 9–29 (AFASRGNVIDMAVGIIIGAAF) and 79–99 (IQTIIDFTIIAFAIFMGVKAI).

This sequence belongs to the MscL family. Homopentamer.

The protein resides in the cell inner membrane. Its function is as follows. Channel that opens in response to stretch forces in the membrane lipid bilayer. May participate in the regulation of osmotic pressure changes within the cell. The protein is Large-conductance mechanosensitive channel of Shewanella baltica (strain OS223).